The sequence spans 309 residues: Methionyl-tRNA formyltransferase (309 aa).

A (6S)-5,6,7,8-tetrahydrofolate-binding site is contributed by 107–110 (SLLP).

The protein belongs to the Fmt family.

It catalyses the reaction L-methionyl-tRNA(fMet) + (6R)-10-formyltetrahydrofolate = N-formyl-L-methionyl-tRNA(fMet) + (6S)-5,6,7,8-tetrahydrofolate + H(+). Attaches a formyl group to the free amino group of methionyl-tRNA(fMet). The formyl group appears to play a dual role in the initiator identity of N-formylmethionyl-tRNA by promoting its recognition by IF2 and preventing the misappropriation of this tRNA by the elongation apparatus. This is Methionyl-tRNA formyltransferase from Borrelia turicatae (strain 91E135).